The chain runs to 137 residues: Small ribosomal subunit protein uS12 (137 aa).

The disordered stretch occupies residues 1–57 (MPTINQLVRKPRKSKVEKSKSPALNVGYNSHKKVQTNVSSPQKRGVATRVGTMTPKK). 3-methylthioaspartic acid is present on Asp-102.

The protein belongs to the universal ribosomal protein uS12 family. Part of the 30S ribosomal subunit. Contacts proteins S8 and S17. May interact with IF1 in the 30S initiation complex.

Its function is as follows. With S4 and S5 plays an important role in translational accuracy. In terms of biological role, interacts with and stabilizes bases of the 16S rRNA that are involved in tRNA selection in the A site and with the mRNA backbone. Located at the interface of the 30S and 50S subunits, it traverses the body of the 30S subunit contacting proteins on the other side and probably holding the rRNA structure together. The combined cluster of proteins S8, S12 and S17 appears to hold together the shoulder and platform of the 30S subunit. The polypeptide is Small ribosomal subunit protein uS12 (Streptococcus sanguinis (strain SK36)).